An 831-amino-acid chain; its full sequence is V-type proton ATPase subunit a (831 aa).

The Cytoplasmic portion of the chain corresponds to 1-418 (MSPSLFRSEE…DSYGIATYRE (418 aa)). A helical transmembrane segment spans residues 419-437 (VNHGIVAIVTFPFLFAIMF). At 438–439 (GD) the chain is on the vacuolar side. A helical membrane pass occupies residues 440-456 (LGHGAIMASVALMFVLY). Topologically, residues 457-471 (EKTLGAKKDLDEIVG) are cytoplasmic. The chain crosses the membrane as a helical span at residues 472 to 501 (MVFYGRYIVLLMGLFSMYVGFVYNDLFSKP). Residues 502-548 (MSIFSSRWVWPVKSEEAIARAVQVGTYPIGIDPTWHSADNNLLFMNS) are Vacuolar-facing. The chain crosses the membrane as a helical span at residues 549–568 (YKMKLSIILGVIHMTFCLFL). Topologically, residues 569-586 (SLSNYRFFKRKLDIYAVF) are cytoplasmic. Residues 587–607 (VPSLIFLEAIFGYLVITIVYK) form a helical membrane-spanning segment. Over 608-650 (WCIDWKAKDLQPPSLLNMLILMFLSPGTLEDQLYPGQKYLQVG) the chain is Vacuolar. A helical transmembrane segment spans residues 651–670 (LVIAALICVPWLLIVKPFVL). Topologically, residues 671–723 (WRRHSNEENKYQSLNSDLPNVDEADALMAVDSQEKQAEPFELGEVVIHQVIHT) are cytoplasmic. The chain crosses the membrane as a helical span at residues 724-748 (IEFCLGCVSHTASYLRLWALSLAHN). Over 749–769 (QLSSVLWNMTLANGFRMTGIV) the chain is Vacuolar. The chain crosses the membrane as a helical span at residues 770–808 (GSIFVVILFGFWFIATCVVLVAMEGTSAMLHSLRLHWVE). Residues 809–831 (GMSKHFEGEGYAFTPFTFKVTAE) lie on the Cytoplasmic side of the membrane.

It belongs to the V-ATPase 116 kDa subunit family. In terms of assembly, V-ATPase is a heteromultimeric enzyme composed of a peripheral catalytic V1 complex (components A to H) attached to an integral membrane V0 proton pore complex (components: a, c, c', c'', d, e, f and VOA1).

It is found in the vacuole membrane. In terms of biological role, subunit of the V0 complex of vacuolar(H+)-ATPase (V-ATPase), a multisubunit enzyme composed of a peripheral complex (V1) that hydrolyzes ATP and a membrane integral complex (V0) that translocates protons. V-ATPase is responsible for acidifying and maintaining the pH of intracellular compartments. The sequence is that of V-type proton ATPase subunit a (vph1) from Schizosaccharomyces pombe (strain 972 / ATCC 24843) (Fission yeast).